A 169-amino-acid chain; its full sequence is Cytochrome c-type biogenesis protein CcmE (169 aa).

The Cytoplasmic portion of the chain corresponds to M1–R7. Residues L8–A28 traverse the membrane as a helical; Signal-anchor for type II membrane protein segment. Topologically, residues M29–R169 are periplasmic. 2 residues coordinate heme: H122 and Y126. Residues L135 to R169 form a disordered region. A compositionally biased stretch (basic and acidic residues) spans G145–A154.

This sequence belongs to the CcmE/CycJ family.

It localises to the cell inner membrane. Functionally, heme chaperone required for the biogenesis of c-type cytochromes. Transiently binds heme delivered by CcmC and transfers the heme to apo-cytochromes in a process facilitated by CcmF and CcmH. This chain is Cytochrome c-type biogenesis protein CcmE, found in Methylorubrum populi (strain ATCC BAA-705 / NCIMB 13946 / BJ001) (Methylobacterium populi).